Consider the following 287-residue polypeptide: tRNA selenocysteine 1-associated protein 1 (287 aa).

RRM domains follow at residues 3-86 (ASLW…YATY) and 96-175 (YSLF…VAIP).

It belongs to the RRM TRSPAP family. As to quaternary structure, component of the tRNA(Sec) complex composed at least of EEFSEC, SECISBP2, SEPHS1, SEPSECS, TRNAU1AP and tRNA(Sec). Found in a complex with tRNA(Sec). Interacts with SEPSECS. Associates with mRNP and/or polysomes. Found in a complex with EEFSEC, SECISBP2, TRNAU1AP and tRNA(Sec).

The protein resides in the nucleus. It is found in the cytoplasm. In terms of biological role, involved in the early steps of selenocysteine biosynthesis and tRNA(Sec) charging to the later steps resulting in the cotranslational incorporation of selenocysteine into selenoproteins. Stabilizes the SECISBP2, EEFSEC and tRNA(Sec) complex. May be involved in the methylation of tRNA(Sec). Enhances efficiency of selenoproteins synthesis. In Bos taurus (Bovine), this protein is tRNA selenocysteine 1-associated protein 1 (TRNAU1AP).